Here is a 220-residue protein sequence, read N- to C-terminus: Small ribosomal subunit protein uS2 (220 aa).

The disordered stretch occupies residues 201 to 220 (LPPDGDLPEPPSEFEVKFKR).

This sequence belongs to the universal ribosomal protein uS2 family.

The polypeptide is Small ribosomal subunit protein uS2 (Staphylothermus marinus (strain ATCC 43588 / DSM 3639 / JCM 9404 / F1)).